A 402-amino-acid polypeptide reads, in one-letter code: Uroporphyrinogen decarboxylase 1, chloroplastic (402 aa).

Residues 1 to 50 (MISATATAAFLAAAPASSSSCTTHRRRSGLPAISASLATASSTEEPLLVR) constitute a chloroplast transit peptide. Residues 67–71 (RQAGR), F86, S116, D117, Y193, S248, and H363 each bind substrate.

This sequence belongs to the uroporphyrinogen decarboxylase family. Homodimer.

The protein resides in the plastid. Its subcellular location is the chloroplast. The catalysed reaction is uroporphyrinogen III + 4 H(+) = coproporphyrinogen III + 4 CO2. The protein operates within porphyrin-containing compound metabolism; protoporphyrin-IX biosynthesis; coproporphyrinogen-III from 5-aminolevulinate: step 4/4. Functionally, catalyzes the decarboxylation of four acetate groups of uroporphyrinogen-III to yield coproporphyrinogen-III. The polypeptide is Uroporphyrinogen decarboxylase 1, chloroplastic (Oryza sativa subsp. japonica (Rice)).